The sequence spans 411 residues: DNA polymerase processivity factor (411 aa).

The segment at 296 to 411 is disordered; sequence LKQPAEQEQP…SNSNSFVSII (116 aa). Residues 304 to 318 show a composition bias toward low complexity; it reads QPTTSQPSDPQSSNS. The segment covering 345–358 has biased composition (acidic residues); sequence DSEEDSDSDSDQDC.

The protein belongs to the herpesviridae DNA polymerase accessory subunit family.

Its function is as follows. Increases the processivity of the viral polymerase, probably by acting as a sliding clamp that prevents dissociation of the polymerase from the active template. In Alcelaphine herpesvirus 1 (strain C500) (AlHV-1), this protein is DNA polymerase processivity factor (59).